A 721-amino-acid polypeptide reads, in one-letter code: uncharacterized protein (721 aa).

Residues Gln6–Leu26 form a helical membrane-spanning segment. Gly308–Thr315 is a binding site for ATP.

The protein belongs to the GSP E family. In terms of processing, this protein undergoes a protein self splicing that involves a post-translational excision of the intervening region (intein) followed by peptide ligation.

Its subcellular location is the membrane. This is an uncharacterized protein from Methanocaldococcus jannaschii (strain ATCC 43067 / DSM 2661 / JAL-1 / JCM 10045 / NBRC 100440) (Methanococcus jannaschii).